Consider the following 219-residue polypeptide: Vesicle-associated membrane protein 721 (219 aa).

Residues 1–196 (MAQQSLIYSF…MWLQNMKIKL (196 aa)) are Cytoplasmic-facing. The region spanning 10-114 (FVARGTVILV…SLNKEFGSKL (105 aa)) is the Longin domain. One can recognise a v-SNARE coiled-coil homology domain in the interval 130–190 (KLAKVKAQVS…TQMRRKMWLQ (61 aa)). The helical; Anchor for type IV membrane protein transmembrane segment at 197-217 (IVLAIIIALILIIVLSVCHGF) threads the bilayer. The Vesicular segment spans residues 218-219 (KC).

It belongs to the synaptobrevin family. Expressed in flowers, leaves, stems and roots.

It is found in the cell membrane. It localises to the early endosome membrane. In terms of biological role, involved in the targeting and/or fusion of transport vesicles to their target membrane. The chain is Vesicle-associated membrane protein 721 from Arabidopsis thaliana (Mouse-ear cress).